The chain runs to 351 residues: High-affinity nickel transport protein (351 aa).

The Cytoplasmic segment spans residues 1-19 (MFQLLAGVRMNSTGRPRAK). Residues 20–40 (IILLYALLIAFNIGAWLCALA) form a helical membrane-spanning segment. Topologically, residues 41-51 (AFRDHPVLLGT) are periplasmic. A helical transmembrane segment spans residues 52 to 72 (ALLAYGLGLRHAVDADHLAAI). Residues 73-94 (DNVTRKLMQDGRRPITAGLWFS) are Cytoplasmic-facing. A helical membrane pass occupies residues 95–115 (LGHSSVVVLASVLIAVMATTL). Residues 116–128 (QERLDAFHEVGSV) lie on the Periplasmic side of the membrane. The helical transmembrane segment at 129-149 (IGTLASALFLFAIAAINLVIL) threads the bilayer. Residues 150–199 (RSAYRAFRRVRRGGIYVEEDFDLLFGNRGFLARIFRPLFRFITRSWHMYP) lie on the Cytoplasmic side of the membrane. A helical transmembrane segment spans residues 200–220 (LGMLFALGFDTATEVALLGIS). The Periplasmic segment spans residues 221–243 (TMEASRGVPIWSILVFPALFTAG). Residues 244-264 (MALIDTIDSILMCGAYAWAYA) traverse the membrane as a helical segment. Topologically, residues 265–269 (KPVRK) are cytoplasmic. The chain crosses the membrane as a helical span at residues 270-290 (LYYNMTITFVSAIVALIVGGI). Topologically, residues 291 to 316 (ETLGLLADKFMLKGVFWNAVGALNEN) are periplasmic. Residues 317 to 337 (FCQLGFVIIGIFTVCWVVSIV) traverse the membrane as a helical segment. At 338 to 351 (VYRLRRYDDSEVRA) the chain is on the cytoplasmic side.

This sequence belongs to the NiCoT transporter (TC 2.A.52) family.

It localises to the cell inner membrane. Functionally, high-affinity nickel transporter responsible for nickel uptake. Necessary for high levels of activity of hydrogenase and urease. Does not transport cobalt. The protein is High-affinity nickel transport protein (hoxN) of Cupriavidus necator (strain ATCC 17699 / DSM 428 / KCTC 22496 / NCIMB 10442 / H16 / Stanier 337) (Ralstonia eutropha).